Reading from the N-terminus, the 55-residue chain is MAKGKRDKIRMISSAATGHFYTTDKNKKNTPGKMEMMKYDPVVRKHVMYKEGKIK.

Belongs to the bacterial ribosomal protein bL33 family.

This is Large ribosomal subunit protein bL33 from Xanthomonas axonopodis pv. citri (strain 306).